The sequence spans 228 residues: MDTMRQRILVVDDDASLAEMLTIVLRGEGFDTAVIGDGTQALTAVRELRPDLVLLDLMLPGMNGIDVCRVLRADSGVPIVMLTAKTDTVDVVLGLESGADDYIMKPFKPKELVARVRARLRRNDDEPAEMLSIADVEIDVPAHKVTRNGEQISLTPLEFDLLVALARKPRQVFTRDVLLEQVWGYRHPADTRLVNVHVQRLRAKVEKDPENPTVVLTVRGVGYKAGPP.

Residues 7 to 120 (RILVVDDDAS…ELVARVRARL (114 aa)) enclose the Response regulatory domain. Residue D56 is modified to 4-aspartylphosphate. Residues 128–227 (AEMLSIADVE…VRGVGYKAGP (100 aa)) constitute a DNA-binding region (ompR/PhoB-type).

In terms of processing, phosphorylated by MtrB.

Member of the two-component regulatory system MtrA/MtrB. This is DNA-binding response regulator MtrA (mtrA) from Mycobacterium bovis (strain ATCC BAA-935 / AF2122/97).